The following is a 789-amino-acid chain: Endonuclease MutS2 (789 aa).

334 to 341 (GPNTGGKT) is an ATP binding site. Residues 690 to 714 (PEKDIQQSGTGKIMKSKTGDTKSEV) form a disordered region. One can recognise a Smr domain in the interval 714-789 (VDVRGKNLEE…GMGVTIVELK (76 aa)).

Belongs to the DNA mismatch repair MutS family. MutS2 subfamily. Homodimer. Binds to stalled ribosomes, contacting rRNA.

Functionally, endonuclease that is involved in the suppression of homologous recombination and thus may have a key role in the control of bacterial genetic diversity. In terms of biological role, acts as a ribosome collision sensor, splitting the ribosome into its 2 subunits. Detects stalled/collided 70S ribosomes which it binds and splits by an ATP-hydrolysis driven conformational change. Acts upstream of the ribosome quality control system (RQC), a ribosome-associated complex that mediates the extraction of incompletely synthesized nascent chains from stalled ribosomes and their subsequent degradation. Probably generates substrates for RQC. This chain is Endonuclease MutS2, found in Alkaliphilus metalliredigens (strain QYMF).